The primary structure comprises 397 residues: Phosphoglycerate kinase (397 aa).

Residues 21 to 23, R37, 60 to 63, R120, and R153 each bind substrate; these read DFN and HLGR. Residues K206, G296, E327, and 353 to 356 contribute to the ATP site; that span reads GGDS.

The protein belongs to the phosphoglycerate kinase family. In terms of assembly, monomer.

The protein localises to the cytoplasm. The catalysed reaction is (2R)-3-phosphoglycerate + ATP = (2R)-3-phospho-glyceroyl phosphate + ADP. Its pathway is carbohydrate degradation; glycolysis; pyruvate from D-glyceraldehyde 3-phosphate: step 2/5. This is Phosphoglycerate kinase from Rhodopirellula baltica (strain DSM 10527 / NCIMB 13988 / SH1).